A 598-amino-acid polypeptide reads, in one-letter code: Aspartate--tRNA(Asp/Asn) ligase (598 aa).

E172 serves as a coordination point for L-aspartate. Residues Q196–K199 are aspartate. R218 contributes to the L-aspartate binding site. ATP is bound by residues R218–E220 and Q227. Residue H454 participates in L-aspartate binding. E488 lines the ATP pocket. Residue R495 participates in L-aspartate binding. G540–R543 is a binding site for ATP.

The protein belongs to the class-II aminoacyl-tRNA synthetase family. Type 1 subfamily. In terms of assembly, homodimer.

The protein localises to the cytoplasm. The enzyme catalyses tRNA(Asx) + L-aspartate + ATP = L-aspartyl-tRNA(Asx) + AMP + diphosphate. Its function is as follows. Aspartyl-tRNA synthetase with relaxed tRNA specificity since it is able to aspartylate not only its cognate tRNA(Asp) but also tRNA(Asn). Reaction proceeds in two steps: L-aspartate is first activated by ATP to form Asp-AMP and then transferred to the acceptor end of tRNA(Asp/Asn). This chain is Aspartate--tRNA(Asp/Asn) ligase, found in Leptothrix cholodnii (strain ATCC 51168 / LMG 8142 / SP-6) (Leptothrix discophora (strain SP-6)).